The following is a 126-amino-acid chain: Glycine cleavage system H protein (126 aa).

A Lipoyl-binding domain is found at 21–103 (TVTIGISEHA…YEGGWIVKVK (83 aa)). The residue at position 62 (K62) is an N6-lipoyllysine.

This sequence belongs to the GcvH family. In terms of assembly, the glycine cleavage system is composed of four proteins: P, T, L and H. (R)-lipoate is required as a cofactor.

The glycine cleavage system catalyzes the degradation of glycine. The H protein shuttles the methylamine group of glycine from the P protein to the T protein. This chain is Glycine cleavage system H protein, found in Vibrio atlanticus (strain LGP32) (Vibrio splendidus (strain Mel32)).